The chain runs to 305 residues: MPTKAKVAIVGSGNISTDLLYKLLRSDWLEPRWMVGIDPQSEGLARARKLGLETTHEGVDWLLAQPEKPDLVFEATSAYVHRDAAPKYEAAGIRAIDLTPAAVGPAVIPPANLRQHLDAPNVNMITCGGQATIPIVFAVSRVVEVPYAEIVASVASVSAGPGTRANIDEFTKTTSRGVETIGGAKRGKAIIILNPADPPMIMRDTIFCAIPEDADRDAIAQSIHDVVKEVQTYVPGYRLLNEPQFDEPSLNSGGQAVVTTFVEVEGAGDYLPPYAGNLDIMTAAATKVGEEIAKETLATTAGGAQ.

Serine 12–isoleucine 15 contributes to the NAD(+) binding site. The active-site Acyl-thioester intermediate is the cysteine 127. Residues serine 158–asparagine 166 and asparagine 277 each bind NAD(+).

This sequence belongs to the acetaldehyde dehydrogenase family.

The catalysed reaction is acetaldehyde + NAD(+) + CoA = acetyl-CoA + NADH + H(+). This is Acetaldehyde dehydrogenase from Mycolicibacterium paratuberculosis (strain ATCC BAA-968 / K-10) (Mycobacterium paratuberculosis).